Here is an 84-residue protein sequence, read N- to C-terminus: Small ribosomal subunit protein uS17 (84 aa).

This sequence belongs to the universal ribosomal protein uS17 family. As to quaternary structure, part of the 30S ribosomal subunit.

Its function is as follows. One of the primary rRNA binding proteins, it binds specifically to the 5'-end of 16S ribosomal RNA. In Clostridium botulinum (strain Alaska E43 / Type E3), this protein is Small ribosomal subunit protein uS17.